A 429-amino-acid chain; its full sequence is Adenylosuccinate synthetase (429 aa).

Residues 12-18 and 40-42 each bind GTP; these read GDEGKGK and GHT. D13 acts as the Proton acceptor in catalysis. Mg(2+)-binding residues include D13 and G40. Residues 13 to 16, 38 to 41, T128, R142, Q223, T238, and R302 contribute to the IMP site; these read DEGK and NAGH. The active-site Proton donor is the H41. Residue 298-304 participates in substrate binding; the sequence is TTTGRPR. GTP is bound by residues R304, 330–332, and 412–414; these read SID and SVG.

It belongs to the adenylosuccinate synthetase family. Homodimer. Requires Mg(2+) as cofactor.

The protein resides in the cytoplasm. It catalyses the reaction IMP + L-aspartate + GTP = N(6)-(1,2-dicarboxyethyl)-AMP + GDP + phosphate + 2 H(+). Its pathway is purine metabolism; AMP biosynthesis via de novo pathway; AMP from IMP: step 1/2. In terms of biological role, plays an important role in the de novo pathway of purine nucleotide biosynthesis. Catalyzes the first committed step in the biosynthesis of AMP from IMP. This is Adenylosuccinate synthetase from Exiguobacterium sp. (strain ATCC BAA-1283 / AT1b).